The sequence spans 314 residues: DNA-directed RNA polymerase subunit alpha (314 aa).

The tract at residues 1–228 (MIEFEKPNIH…DHLSIFVNLT (228 aa)) is alpha N-terminal domain (alpha-NTD). An alpha C-terminal domain (alpha-CTD) region spans residues 245–314 (KEKMLEMTIE…DLGLSLRKED (70 aa)).

This sequence belongs to the RNA polymerase alpha chain family. As to quaternary structure, homodimer. The RNAP catalytic core consists of 2 alpha, 1 beta, 1 beta' and 1 omega subunit. When a sigma factor is associated with the core the holoenzyme is formed, which can initiate transcription.

It carries out the reaction RNA(n) + a ribonucleoside 5'-triphosphate = RNA(n+1) + diphosphate. Functionally, DNA-dependent RNA polymerase catalyzes the transcription of DNA into RNA using the four ribonucleoside triphosphates as substrates. This is DNA-directed RNA polymerase subunit alpha from Lactiplantibacillus plantarum (strain ATCC BAA-793 / NCIMB 8826 / WCFS1) (Lactobacillus plantarum).